A 449-amino-acid chain; its full sequence is Putative F-box/LRR-repeat protein At3g44090 (449 aa).

An F-box domain is found at 23-77 (LASMDCLPDDLLVQILYFLPTKEAISTSLLSKRWRTLYSLVHNLDLDDYIFWHHE). LRR repeat units follow at residues 133-163 (YYNLQKDSLWQFGFPYKVFTSTKLVKLSLGT), 186-212 (YIWFEDNQLSDVFLAACPALEDLTIHH), 214-231 (FRPFLISSKNLKKLSVTI), 247-278 (TPNVVDLYYSDFPRPIAPHCHLDSLAKVELDL), 286-311 (RQVQNDADVKNLISEIRNVKTLHLTY), and 320-345 (SKKRDWKVLPLLLERSPNLKTLVLSG).

This Arabidopsis thaliana (Mouse-ear cress) protein is Putative F-box/LRR-repeat protein At3g44090.